The sequence spans 101 residues: Small ribosomal subunit protein uS14 (101 aa).

The protein belongs to the universal ribosomal protein uS14 family. As to quaternary structure, part of the 30S ribosomal subunit. Contacts proteins S3 and S10.

In terms of biological role, binds 16S rRNA, required for the assembly of 30S particles and may also be responsible for determining the conformation of the 16S rRNA at the A site. This Chlamydia abortus (strain DSM 27085 / S26/3) (Chlamydophila abortus) protein is Small ribosomal subunit protein uS14.